Consider the following 335-residue polypeptide: MTIDTNPESSTPSAPAYNPSEKQKGSAKTIRIPIKVVPMERLPKPDWIRVKAGSPSTRFYEIKDILRANNLVTVCEEASCPNIGECFGKGTATFMIMGDKCTRRCPFCDVGHGRPDPLDVNEPENLAKTIAALRLNYVVITSVDRDDLRDGGAGHFAECIRRVRELSPNTRIEILVPDFRGRMDRALEILNLAPPDVMNHNLETAPRLYKEARPGSDYAYSLNLLKRFKALHPNTPTKSGIMVGLGETDEEVLQVMRDMRAHDVDMLTIGQYLMPSGDHLPVRRYVHPDTFKMYEEEAYKMGFAHAAVGAMVRSSYHADQQAHGVTAGASQLPHD.

Polar residues predominate over residues 1–13 (MTIDTNPESSTPS). The interval 1-29 (MTIDTNPESSTPSAPAYNPSEKQKGSAKT) is disordered. [4Fe-4S] cluster-binding residues include Cys-75, Cys-80, Cys-86, Cys-101, Cys-105, Cys-108, and Ser-315. Residues 86–304 (CFGKGTATFM…EEEAYKMGFA (219 aa)) form the Radical SAM core domain.

The protein belongs to the radical SAM superfamily. Lipoyl synthase family. It depends on [4Fe-4S] cluster as a cofactor.

It localises to the cytoplasm. It catalyses the reaction [[Fe-S] cluster scaffold protein carrying a second [4Fe-4S](2+) cluster] + N(6)-octanoyl-L-lysyl-[protein] + 2 oxidized [2Fe-2S]-[ferredoxin] + 2 S-adenosyl-L-methionine + 4 H(+) = [[Fe-S] cluster scaffold protein] + N(6)-[(R)-dihydrolipoyl]-L-lysyl-[protein] + 4 Fe(3+) + 2 hydrogen sulfide + 2 5'-deoxyadenosine + 2 L-methionine + 2 reduced [2Fe-2S]-[ferredoxin]. It functions in the pathway protein modification; protein lipoylation via endogenous pathway; protein N(6)-(lipoyl)lysine from octanoyl-[acyl-carrier-protein]: step 2/2. Functionally, catalyzes the radical-mediated insertion of two sulfur atoms into the C-6 and C-8 positions of the octanoyl moiety bound to the lipoyl domains of lipoate-dependent enzymes, thereby converting the octanoylated domains into lipoylated derivatives. The chain is Lipoyl synthase from Herminiimonas arsenicoxydans.